The sequence spans 130 residues: Sulfurtransferase TusD (130 aa).

The Cysteine persulfide intermediate role is filled by Cys-80.

This sequence belongs to the DsrE/TusD family. In terms of assembly, heterohexamer, formed by a dimer of trimers. The hexameric TusBCD complex contains 2 copies each of TusB, TusC and TusD. The TusBCD complex interacts with TusE.

The protein localises to the cytoplasm. Functionally, part of a sulfur-relay system required for 2-thiolation of 5-methylaminomethyl-2-thiouridine (mnm(5)s(2)U) at tRNA wobble positions. Accepts sulfur from TusA and transfers it in turn to TusE. This is Sulfurtransferase TusD from Proteus mirabilis (strain HI4320).